Consider the following 95-residue polypeptide: Small ribosomal subunit protein bS6 (95 aa).

Belongs to the bacterial ribosomal protein bS6 family.

Its function is as follows. Binds together with bS18 to 16S ribosomal RNA. The chain is Small ribosomal subunit protein bS6 from Nocardia farcinica (strain IFM 10152).